The sequence spans 266 residues: Glucosamine-6-phosphate deaminase (266 aa).

The active-site Proton acceptor; for enolization step is D72. D141 (for ring-opening step) is an active-site residue. H143 (proton acceptor; for ring-opening step) is an active-site residue. The For ring-opening step role is filled by E148.

It belongs to the glucosamine/galactosamine-6-phosphate isomerase family. NagB subfamily. In terms of assembly, homohexamer.

The enzyme catalyses alpha-D-glucosamine 6-phosphate + H2O = beta-D-fructose 6-phosphate + NH4(+). The protein operates within amino-sugar metabolism; N-acetylneuraminate degradation; D-fructose 6-phosphate from N-acetylneuraminate: step 5/5. Allosterically activated by N-acetylglucosamine 6-phosphate (GlcNAc6P). Functionally, catalyzes the reversible isomerization-deamination of glucosamine 6-phosphate (GlcN6P) to form fructose 6-phosphate (Fru6P) and ammonium ion. The chain is Glucosamine-6-phosphate deaminase from Vibrio campbellii (strain ATCC BAA-1116).